Consider the following 279-residue polypeptide: Very long chain fatty acid elongase 2 (279 aa).

The next 7 helical transmembrane spans lie at 12–32 (WFLLDSYLPTFTLTIVYLLSI), 50–70 (ILTLYNLGITLLSAYMLVELV), 98–118 (VLWWYYFSKLVEFLDTIFFVL), 136–156 (MFNIWWCVLNWIPCGQSFFGP), 158–178 (LNSFIHILMYSYYGLSVFPSM), 188–208 (LTQAQLVQFVLTITHTLSAVV), and 213–233 (FPFGCLIFQSSYMMTLVILFL). The Di-lysine motif signature appears at 276-279 (KKVQ).

This sequence belongs to the ELO family. ELOVL2 subfamily. As to quaternary structure, interacts with TECR.

The protein resides in the endoplasmic reticulum membrane. It catalyses the reaction a very-long-chain acyl-CoA + malonyl-CoA + H(+) = a very-long-chain 3-oxoacyl-CoA + CO2 + CoA. It carries out the reaction (7Z,10Z,13Z,16Z,19Z)-docosapentaenoyl-CoA + malonyl-CoA + H(+) = (9Z,12Z,15Z,18Z,21Z)-3-oxotetracosapentaenoyl-CoA + CO2 + CoA. The catalysed reaction is (5Z,8Z,11Z,14Z,17Z)-eicosapentaenoyl-CoA + malonyl-CoA + H(+) = 3-oxo-(7Z,10Z,13Z,16Z,19Z)-docosapentaenoyl-CoA + CO2 + CoA. The enzyme catalyses (5Z,8Z,11Z,14Z)-eicosatetraenoyl-CoA + malonyl-CoA + H(+) = (7Z,10Z,13Z,16Z)-3-oxodocosatetraenoyl-CoA + CO2 + CoA. It catalyses the reaction (7Z,10Z,13Z,16Z)-docosatetraenoyl-CoA + malonyl-CoA + H(+) = (9Z,12Z,15Z,18Z)-3-oxotetracosatetraenoyl-CoA + CO2 + CoA. Its pathway is lipid metabolism; polyunsaturated fatty acid biosynthesis. Functionally, catalyzes the first and rate-limiting reaction of the four reactions that constitute the long-chain fatty acids elongation cycle. This endoplasmic reticulum-bound enzymatic process allows the addition of 2 carbons to the chain of long- and very long-chain fatty acids (VLCFAs) per cycle. Condensing enzyme that catalyzes the synthesis of polyunsaturated very long chain fatty acid (C20- and C22-PUFA), acting specifically toward polyunsaturated acyl-CoA with the higher activity toward C20:4(n-6) acyl-CoA. May participate in the production of polyunsaturated VLCFAs of different chain lengths that are involved in multiple biological processes as precursors of membrane lipids and lipid mediators. In Rattus norvegicus (Rat), this protein is Very long chain fatty acid elongase 2.